A 74-amino-acid chain; its full sequence is uncharacterized protein (74 aa).

This is an uncharacterized protein from Staphylococcus aureus.